We begin with the raw amino-acid sequence, 302 residues long: Cyclin-dependent kinase 1-B (302 aa).

Residues 4 to 287 (YTKIEKIGEG…ARKAMLHPYF (284 aa)) form the Protein kinase domain. Residues 10 to 18 (IGEGTYGVV) and K33 contribute to the ATP site. T14 is modified (phosphothreonine). Y15 carries the post-translational modification Phosphotyrosine; by wee1 and wee2. The Proton acceptor role is filled by D128. T161 is subject to Phosphothreonine; by cak. The residue at position 277 (S277) is a Phosphoserine.

It belongs to the protein kinase superfamily. CMGC Ser/Thr protein kinase family. CDC2/CDKX subfamily. As to quaternary structure, forms a stable but non-covalent complex with a regulatory subunit and with a cyclin. Interacts with spdya. Phosphorylation at Tyr-15 by wee1 and wee2 inhibits the protein kinase activity and acts negative regulator of entry into mitosis (G2 to M transition).

The protein resides in the nucleus. The enzyme catalyses L-seryl-[protein] + ATP = O-phospho-L-seryl-[protein] + ADP + H(+). The catalysed reaction is L-threonyl-[protein] + ATP = O-phospho-L-threonyl-[protein] + ADP + H(+). It catalyses the reaction [DNA-directed RNA polymerase] + ATP = phospho-[DNA-directed RNA polymerase] + ADP + H(+). With respect to regulation, phosphorylation at Thr-14 or Tyr-15 inactivates the enzyme, while phosphorylation at Thr-161 activates it. In terms of biological role, plays a key role in the control of the eukaryotic cell cycle by modulating the centrosome cycle as well as mitotic onset; promotes G2-M transition via association with multiple interphase cyclins. During G2 and early mitosis, CDC25A/B/C-mediated dephosphorylation activates CDK1/cyclin complexes which phosphorylate several substrates that trigger at least centrosome separation, Golgi dynamics, nuclear envelope breakdown and chromosome condensation. Once chromosomes are condensed and aligned at the metaphase plate, CDK1 activity is switched off by WEE1- and PKMYT1-mediated phosphorylation to allow sister chromatid separation, chromosome decondensation, reformation of the nuclear envelope and cytokinesis. Catalyzes lamin (LMNA, LMNB1 and LMNB2) phosphorylation at the onset of mitosis, promoting nuclear envelope breakdown. This Xenopus laevis (African clawed frog) protein is Cyclin-dependent kinase 1-B (cdk1-b).